Consider the following 146-residue polypeptide: Transcription antitermination protein NusB (146 aa).

It belongs to the NusB family.

In terms of biological role, involved in transcription antitermination. Required for transcription of ribosomal RNA (rRNA) genes. Binds specifically to the boxA antiterminator sequence of the ribosomal RNA (rrn) operons. The sequence is that of Transcription antitermination protein NusB from Koribacter versatilis (strain Ellin345).